Here is a 141-residue protein sequence, read N- to C-terminus: Large ribosomal subunit protein uL16 (141 aa).

Residues 1-17 show a composition bias toward basic residues; sequence MLMPKRTKFRKQMKGRN. A disordered region spans residues 1 to 22; that stretch reads MLMPKRTKFRKQMKGRNRGYAT.

This sequence belongs to the universal ribosomal protein uL16 family. As to quaternary structure, part of the 50S ribosomal subunit.

Functionally, binds 23S rRNA and is also seen to make contacts with the A and possibly P site tRNAs. This is Large ribosomal subunit protein uL16 from Campylobacter curvus (strain 525.92).